Reading from the N-terminus, the 244-residue chain is Transcriptional activator protein FnrA (244 aa).

Residues 159-232 (KTADERIATF…GKEVRILDSI (74 aa)) enclose the HTH crp-type domain. A DNA-binding region (H-T-H motif) is located at residues 192-211 (RNEIGNYLGLAVETVSRVFT).

Transcriptional regulator of arginine deiminase. The polypeptide is Transcriptional activator protein FnrA (fnrA) (Stutzerimonas stutzeri (Pseudomonas stutzeri)).